The following is a 382-amino-acid chain: Protein farnesyltransferase subunit beta (382 aa).

PFTB repeat units follow at residues 78–119 (CERA…CLCD), 129–170 (RDRL…SLVG), 178–219 (FEGT…ALLG), 226–268 (EIKL…VIVA), and 286–328 (PEKL…SSIA). (2E,6E)-farnesyl diphosphate contacts are provided by residues 204–207 (HGGY) and 247–250 (RSNK). Zn(2+)-binding residues include D253 and C255. 256–259 (YSWW) contributes to the (2E,6E)-farnesyl diphosphate binding site. H316 serves as a coordination point for Zn(2+).

This sequence belongs to the protein prenyltransferase subunit beta family. Heterodimer of an alpha(cwp1) and a beta(cpp1) subunit. Zn(2+) is required as a cofactor.

The enzyme catalyses L-cysteinyl-[protein] + (2E,6E)-farnesyl diphosphate = S-(2E,6E)-farnesyl-L-cysteinyl-[protein] + diphosphate. Catalyzes the transfer of a farnesyl moiety from farnesyl diphosphate to a cysteine at the fourth position from the C-terminus of several proteins. The beta(cpp1) subunit is responsible for peptide-binding. The chain is Protein farnesyltransferase subunit beta (cpp1) from Schizosaccharomyces pombe (strain 972 / ATCC 24843) (Fission yeast).